The following is a 342-amino-acid chain: tRNA-specific 2-thiouridylase MnmA (342 aa).

ATP contacts are provided by residues 6–13 and Leu32; that span reads LLSGGVDS. The Nucleophile role is filled by Cys92. A disulfide bond links Cys92 and Cys191. Position 116 (Gly116) interacts with ATP. Residues 138–140 form an interaction with tRNA region; sequence KDQ. Residue Cys191 is the Cysteine persulfide intermediate of the active site. Residues 293 to 294 are interaction with tRNA; it reads RY.

The protein belongs to the MnmA/TRMU family.

The protein resides in the cytoplasm. The catalysed reaction is S-sulfanyl-L-cysteinyl-[protein] + uridine(34) in tRNA + AH2 + ATP = 2-thiouridine(34) in tRNA + L-cysteinyl-[protein] + A + AMP + diphosphate + H(+). Functionally, catalyzes the 2-thiolation of uridine at the wobble position (U34) of tRNA, leading to the formation of s(2)U34. The sequence is that of tRNA-specific 2-thiouridylase MnmA from Helicobacter pylori (strain HPAG1).